The following is a 34-amino-acid chain: Beta/mu-theraphotoxin-Pe1b (34 aa).

Disulfide bonds link C2–C16, C9–C21, and C15–C28.

This sequence belongs to the neurotoxin 10 (Hwtx-1) family. 54 (ProTx-1) subfamily. Expressed by the venom gland.

The protein resides in the secreted. Functionally, ion channel impairing toxin that inhibits several voltage-gated sodium channels. It acts by inhibiting the inward component of the sodium current and by shifting the voltage dependence of channel activation to more depolarized potentials. Its most potent activity is on Nav1.7/SCN9A (IC(50)=167 nM), followed by Nav1.6/SCN8A (IC(50)=696 nM), and Nav1.2/SCN2A (IC(50)=3.54 uM). This is Beta/mu-theraphotoxin-Pe1b from Phormingochilus everetti (Malaysian purple earth tiger tarantula).